Reading from the N-terminus, the 181-residue chain is NADH-quinone oxidoreductase subunit B 2 (181 aa).

Residues C44, C45, C110, and C139 each coordinate [4Fe-4S] cluster.

This sequence belongs to the complex I 20 kDa subunit family. NDH-1 is composed of 14 different subunits. Subunits NuoB, C, D, E, F, and G constitute the peripheral sector of the complex. The cofactor is [4Fe-4S] cluster.

It is found in the cell inner membrane. It carries out the reaction a quinone + NADH + 5 H(+)(in) = a quinol + NAD(+) + 4 H(+)(out). Its function is as follows. NDH-1 shuttles electrons from NADH, via FMN and iron-sulfur (Fe-S) centers, to quinones in the respiratory chain. The immediate electron acceptor for the enzyme in this species is believed to be a menaquinone. Couples the redox reaction to proton translocation (for every two electrons transferred, four hydrogen ions are translocated across the cytoplasmic membrane), and thus conserves the redox energy in a proton gradient. This Cytophaga hutchinsonii (strain ATCC 33406 / DSM 1761 / CIP 103989 / NBRC 15051 / NCIMB 9469 / D465) protein is NADH-quinone oxidoreductase subunit B 2.